Reading from the N-terminus, the 1613-residue chain is Reverse gyrase (1613 aa).

An RG N-terminal-type zinc finger spans residues 1 to 38 (MIPMIYKEMCPNCNGEITSERLAIGVCEKCLKEENVFE). Cys-10, Cys-13, Cys-27, and Cys-30 together coordinate Zn(2+). ATP is bound by residues Gln-83 and 100–107 (VPTGVGKS). A Helicase ATP-binding domain is found at 87–291 (AKRVLKNKSF…LYRELLDFEI (205 aa)). A DEAD box motif is present at residues 203-206 (DDVD). One can recognise a Helicase C-terminal domain in the interval 310–525 (SKEKILEYIK…IDEVNLEELI (216 aa)). A topoisomerase I region spans residues 546–1613 (DLLKSVLMVV…ALHEEILSIR (1068 aa)). The Toprim domain occupies 550–712 (SVLMVVESPN…NIYRVGFNEI (163 aa)). 2 residues coordinate Mg(2+): Glu-556 and Asp-681. Residues 733 to 1613 (DENKVKGQVV…ALHEEILSIR (881 aa)) form the Topo IA-type catalytic domain. One can recognise a DOD-type homing endonuclease domain in the interval 1070 to 1199 (FAGLVLGDGS…IGIYLNSIGI (130 aa)). Tyr-1363 acts as the O-(5'-phospho-DNA)-tyrosine intermediate in catalysis.

The protein in the N-terminal section; belongs to the DEAD box helicase family. DDVD subfamily. In the C-terminal section; belongs to the type IA topoisomerase family. As to quaternary structure, monomer. The cofactor is Zn(2+). Requires Mg(2+) as cofactor. This protein undergoes a protein self splicing that involves a post-translational excision of the intervening region (intein) followed by peptide ligation.

The protein resides in the cytoplasm. The enzyme catalyses ATP + H2O = ADP + phosphate + H(+). Its function is as follows. Modifies the topological state of DNA by introducing positive supercoils in an ATP-dependent process, increasing the linking number in steps of +1. Binds to single-stranded DNA, transiently cleaves and then rejoins the ends, introducing a positive supercoil in the process. The scissile phosphodiester is attacked by the catalytic tyrosine of the enzyme, resulting in the formation of a DNA-(5'-phosphotyrosyl)-enzyme intermediate. Probably involved in rewinding DNA strands in regions of the chromosome that have opened up to allow replication, transcription, DNA repair and/or for DNA protection. The sequence is that of Reverse gyrase from Methanocaldococcus jannaschii (strain ATCC 43067 / DSM 2661 / JAL-1 / JCM 10045 / NBRC 100440) (Methanococcus jannaschii).